The following is a 396-amino-acid chain: F-box protein At2g21930 (396 aa).

Residues 19-65 enclose the F-box domain; sequence SGNSVQIPFDLIPEILKRLPVKTLARFLSVSKEYTSIIRNRDFMKSY.

The sequence is that of F-box protein At2g21930 from Arabidopsis thaliana (Mouse-ear cress).